Here is a 969-residue protein sequence, read N- to C-terminus: Exoribonuclease II, mitochondrial (969 aa).

The transit peptide at 1 to 41 (MVVRRKVHVLLIARSFHSYTPCFRVTTRGKRQRSKSKQQAK) directs the protein to the mitochondrion. Residues 28–38 (RGKRQRSKSKQ) show a composition bias toward basic residues. The segment at 28 to 54 (RGKRQRSKSKQQAKVELDHTRELDNDQ) is disordered. The span at 40–51 (AKVELDHTRELD) shows a compositional bias: basic and acidic residues. Residues 522–853 (RYDFGDLRVF…NHLQIHRHLQ (332 aa)) form the RNB domain.

This sequence belongs to the RNR ribonuclease family. As to quaternary structure, MSU1 and SUV3 are the two components of the mitochondrial degradosome (mtEXO).

It localises to the mitochondrion matrix. The catalysed reaction is Exonucleolytic cleavage in the 3'- to 5'-direction to yield nucleoside 5'-phosphates.. Essential for mitochondrial biogenesis. In terms of biological role, required for intron-independent turnover and processing of mitochondrial RNA. Participates in 3' mtRNA processing where it hydrolyzes single-stranded RNA or partially double-stranded RNA with 3' single-stranded tails. The protein is Exoribonuclease II, mitochondrial (DSS1) of Saccharomyces cerevisiae (strain ATCC 204508 / S288c) (Baker's yeast).